We begin with the raw amino-acid sequence, 385 residues long: Chaperone protein DnaJ 2 (385 aa).

The region spanning 10-75 (DYYKELGVSS…AKRKEYDETR (66 aa)) is the J domain. The CR-type zinc-finger motif lies at 155-233 (GVTVPLRMTS…CHGSGIQNRT (79 aa)). Residues cysteine 168, cysteine 171, cysteine 185, cysteine 188, cysteine 207, cysteine 210, cysteine 221, and cysteine 224 each coordinate Zn(2+). CXXCXGXG motif repeat units lie at residues 168 to 175 (CTTCHGSG), 185 to 192 (CPICNGTG), 207 to 214 (CDGCRGTG), and 221 to 228 (CVDCHGSG).

Belongs to the DnaJ family. As to quaternary structure, homodimer. Zn(2+) is required as a cofactor.

It localises to the cytoplasm. Its function is as follows. Participates actively in the response to hyperosmotic and heat shock by preventing the aggregation of stress-denatured proteins and by disaggregating proteins, also in an autonomous, DnaK-independent fashion. Unfolded proteins bind initially to DnaJ; upon interaction with the DnaJ-bound protein, DnaK hydrolyzes its bound ATP, resulting in the formation of a stable complex. GrpE releases ADP from DnaK; ATP binding to DnaK triggers the release of the substrate protein, thus completing the reaction cycle. Several rounds of ATP-dependent interactions between DnaJ, DnaK and GrpE are required for fully efficient folding. Also involved, together with DnaK and GrpE, in the DNA replication of plasmids through activation of initiation proteins. The chain is Chaperone protein DnaJ 2 from Nocardia farcinica (strain IFM 10152).